Here is a 704-residue protein sequence, read N- to C-terminus: Elongation factor G (704 aa).

The tr-type G domain maps to 8–290 (ARYRNIGISA…AVIDYLPSPV (283 aa)). GTP is bound by residues 17-24 (AHIDAGKT), 88-92 (DTPGH), and 142-145 (NKMD). An N6-acetyllysine mark is found at lysine 504 and lysine 643.

The protein belongs to the TRAFAC class translation factor GTPase superfamily. Classic translation factor GTPase family. EF-G/EF-2 subfamily.

Its subcellular location is the cytoplasm. Its function is as follows. Catalyzes the GTP-dependent ribosomal translocation step during translation elongation. During this step, the ribosome changes from the pre-translocational (PRE) to the post-translocational (POST) state as the newly formed A-site-bound peptidyl-tRNA and P-site-bound deacylated tRNA move to the P and E sites, respectively. Catalyzes the coordinated movement of the two tRNA molecules, the mRNA and conformational changes in the ribosome. This chain is Elongation factor G, found in Escherichia coli O17:K52:H18 (strain UMN026 / ExPEC).